A 426-amino-acid polypeptide reads, in one-letter code: Histidine--tRNA ligase (426 aa).

This sequence belongs to the class-II aminoacyl-tRNA synthetase family. Homodimer.

It localises to the cytoplasm. The enzyme catalyses tRNA(His) + L-histidine + ATP = L-histidyl-tRNA(His) + AMP + diphosphate + H(+). This chain is Histidine--tRNA ligase, found in Microcystis aeruginosa (strain NIES-843 / IAM M-2473).